Here is a 190-residue protein sequence, read N- to C-terminus: E3 ubiquitin-protein ligase RNF183 (190 aa).

The Cytoplasmic portion of the chain corresponds to 1-159; it reads MSEPQGQELR…RECVRNPHFR (159 aa). The RING-type zinc finger occupies 13-60; sequence CPVCWNPFNNTFHTPKVLDCCHSFCVECLAHLSLVTPARRRLLCPLCR. The helical; Anchor for type IV membrane protein transmembrane segment at 160–180 threads the bilayer; the sequence is IFAYLMAVILSVTLLLIFSIF. The Lumenal segment spans residues 181–190; the sequence is WTKQFFWGMG.

Interacts with FATE1. Interacts with SEC16A. Interacts with BCL2L1. In terms of processing, autoubiquitinated (in vitro). In terms of tissue distribution, highly expressed in the kidney and testis.

Its subcellular location is the endoplasmic reticulum membrane. The protein resides in the endoplasmic reticulum. The protein localises to the golgi apparatus. It is found in the cis-Golgi network membrane. It localises to the lysosome membrane. The catalysed reaction is S-ubiquitinyl-[E2 ubiquitin-conjugating enzyme]-L-cysteine + [acceptor protein]-L-lysine = [E2 ubiquitin-conjugating enzyme]-L-cysteine + N(6)-ubiquitinyl-[acceptor protein]-L-lysine.. The protein operates within protein modification; protein ubiquitination. Its function is as follows. Acts as an E3 ubiquitin ligase catalyzing the covalent attachment of ubiquitin moieties onto substrate proteins. Triggers apoptosis in response to prolonged ER stress by mediating the polyubiquitination and subsequent proteasomal degradation of BCL2L1. May collaborate with FATE1 to restrain BIK protein levels thus regulating apoptotic signaling. The sequence is that of E3 ubiquitin-protein ligase RNF183 (Rnf183) from Mus musculus (Mouse).